Consider the following 252-residue polypeptide: Major prion protein (252 aa).

Positions Met1–Cys22 are cleaved as a signal peptide. Residues Lys23–Tyr38 form an interaction with ADGRG6 region. The interaction with GRB2, ERI3 and SYN1 stretch occupies residues Lys23–Ser229. Residues Pro26 to Thr106 are disordered. Tandem repeats lie at residues Pro51–Gln58, Pro59–Gln66, Pro67–Gln74, Pro75–Gln82, and Pro83–Gln90. The 5 X 8 AA tandem repeats of P-H-G-G-G-W-G-Q stretch occupies residues Pro51–Gln90. Gly residues predominate over residues Gln52–Thr94. Cu(2+) contacts are provided by His60, Gly61, Gly62, His68, Gly69, Gly70, His76, Gly77, Gly78, His84, Gly85, and Gly86. Cys178 and Cys213 form a disulfide bridge. N-linked (GlcNAc...) asparagine glycosylation is found at Asn180 and Asn196. A lipid anchor (GPI-anchor amidated serine) is attached at Ser229. Residues Ser230–Gly252 constitute a propeptide, removed in mature form.

This sequence belongs to the prion family. In terms of assembly, monomer and homodimer. Has a tendency to aggregate into amyloid fibrils containing a cross-beta spine, formed by a steric zipper of superposed beta-strands. Soluble oligomers may represent an intermediate stage on the path to fibril formation. Copper binding may promote oligomerization. Interacts with GRB2, APP, ERI3/PRNPIP and SYN1. Mislocalized cytosolically exposed PrP interacts with MGRN1; this interaction alters MGRN1 subcellular location and causes lysosomal enlargement. Interacts with APP. Interacts with KIAA1191. Interacts with ADGRG6.

It localises to the cell membrane. Its subcellular location is the golgi apparatus. Its primary physiological function is unclear. May play a role in neuronal development and synaptic plasticity. May be required for neuronal myelin sheath maintenance. May promote myelin homeostasis through acting as an agonist for ADGRG6 receptor. May play a role in iron uptake and iron homeostasis. Soluble oligomers are toxic to cultured neuroblastoma cells and induce apoptosis (in vitro). Association with GPC1 (via its heparan sulfate chains) targets PRNP to lipid rafts. Also provides Cu(2+) or Zn(2+) for the ascorbate-mediated GPC1 deaminase degradation of its heparan sulfate side chains. The sequence is that of Major prion protein (PRNP) from Sapajus apella (Brown-capped capuchin).